The chain runs to 135 residues: MSDLALTWHNGEGDLVLGTESLLLDDSLTNAIIISLFTDLRVEGERGWWGDSYNDGFQTGSKLWTLSRAKQLPEILDDAQLYASQALQWLVDDGVAKSVQVIASNPQMSVLLLEILVVLPDGSTEQRTFRANWSL.

This sequence to phage Mu protein gp46.

The protein is Mu-like prophage FluMu protein gp46 of Haemophilus influenzae (strain ATCC 51907 / DSM 11121 / KW20 / Rd).